The sequence spans 423 residues: AP-1 complex subunit mu-2 (423 aa).

The MHD domain occupies 168–421 (KNEVFIDVIE…ITQSGDYQLR (254 aa)).

This sequence belongs to the adaptor complexes medium subunit family. As to quaternary structure, adaptor protein complex 1 (AP-1) is a heterotetramer composed of two large adaptins (gamma-type subunit AP1G1 and beta-type subunit AP1B1), a medium adaptin (mu-type subunit AP1M1 or AP1M2) and a small adaptin (sigma-type subunit AP1S1 or AP1S2 or AP1S3). Interacts with P2X4. In terms of processing, phosphorylation of membrane-bound AP1M1/AP1M2 increases its affinity for sorting signals.

It localises to the golgi apparatus. The protein resides in the cytoplasmic vesicle. Its subcellular location is the clathrin-coated vesicle membrane. Functionally, subunit of clathrin-associated adaptor protein complex 1 that plays a role in protein sorting in the trans-Golgi network (TGN) and endosomes. The AP complexes mediate the recruitment of clathrin to membranes and the recognition of sorting signals within the cytosolic tails of transmembrane cargo molecules. The protein is AP-1 complex subunit mu-2 (AP1M2) of Homo sapiens (Human).